Consider the following 258-residue polypeptide: ATP synthase subunit a (258 aa).

Transmembrane regions (helical) follow at residues 30–50, 85–105, 122–142, 151–171, 198–218, and 230–250; these read SSYFMVLTTVLTIVLFMVAMS, FFPFVFTLFIFILVANMLGMF, LIVTVALAMLVWLTVIIYGVF, LFVPSGVPIFVLPLVVVIEII, FAGFVVTLAAAWGGFGYLAGI, and LEFLVAFLQAYVFAMLTCIYL.

The protein belongs to the ATPase A chain family. As to quaternary structure, F-type ATPases have 2 components, CF(1) - the catalytic core - and CF(0) - the membrane proton channel. CF(1) has five subunits: alpha(3), beta(3), gamma(1), delta(1), epsilon(1). CF(0) has three main subunits: a(1), b(2) and c(9-12). The alpha and beta chains form an alternating ring which encloses part of the gamma chain. CF(1) is attached to CF(0) by a central stalk formed by the gamma and epsilon chains, while a peripheral stalk is formed by the delta and b chains.

The protein resides in the cell inner membrane. Its function is as follows. Key component of the proton channel; it plays a direct role in the translocation of protons across the membrane. This is ATP synthase subunit a from Maricaulis maris (strain MCS10) (Caulobacter maris).